The chain runs to 359 residues: Molybdenum import ATP-binding protein ModC (359 aa).

The region spanning 1–233 (MSGLTVSIRG…IDAESEGGGV (233 aa)) is the ABC transporter domain. An ATP-binding site is contributed by 32-39 (GHSGAGKT). The Mop domain occupies 289-355 (AISIRNLLPV…VKAVSVDRAA (67 aa)).

This sequence belongs to the ABC transporter superfamily. Molybdate importer (TC 3.A.1.8) family. As to quaternary structure, the complex is composed of two ATP-binding proteins (ModC), two transmembrane proteins (ModB) and a solute-binding protein (ModA).

The protein localises to the cell inner membrane. It catalyses the reaction molybdate(out) + ATP + H2O = molybdate(in) + ADP + phosphate + H(+). Functionally, part of the ABC transporter complex ModABC involved in molybdenum import. Responsible for energy coupling to the transport system. The sequence is that of Molybdenum import ATP-binding protein ModC from Brucella suis biovar 1 (strain 1330).